A 549-amino-acid polypeptide reads, in one-letter code: Cation/acetate symporter ActP (549 aa).

A run of 13 helical transmembrane segments spans residues 33–53, 77–97, 103–123, 148–168, 183–203, 206–226, 262–282, 303–323, 355–375, 404–424, 428–448, 464–484, and 493–513; these read WQAI…TYWA, LAIA…ALVF, GLIY…LIAE, ILSA…QMVG, IAVV…GMLA, WVQI…AFMV, ISAL…PHIL, GFMG…IMLV, LFLG…VAGL, VSKI…FLFE, IAFM…PIIL, GGWL…TIWV, and IFPY…GIWF.

The protein belongs to the sodium:solute symporter (SSF) (TC 2.A.21) family.

The protein resides in the cell inner membrane. Functionally, transports acetate. The polypeptide is Cation/acetate symporter ActP (Salmonella paratyphi C (strain RKS4594)).